A 384-amino-acid chain; its full sequence is Chaperone protein DnaJ (384 aa).

One can recognise a J domain in the interval 5 to 70 (DFYQVLGVSK…QKRQMYDQYG (66 aa)). Residues 138–216 (GKTVELEIPT…CHGHGRKEET (79 aa)) form a CR-type zinc finger. Zn(2+) contacts are provided by C151, C154, C168, C171, C190, C193, C204, and C207. 4 CXXCXGXG motif repeats span residues 151 to 158 (CRDCNGSG), 168 to 175 (CGHCHGSG), 190 to 197 (CPQCRGTG), and 204 to 211 (CRTCHGHG).

It belongs to the DnaJ family. Homodimer. The cofactor is Zn(2+).

Its subcellular location is the cytoplasm. Its function is as follows. Participates actively in the response to hyperosmotic and heat shock by preventing the aggregation of stress-denatured proteins and by disaggregating proteins, also in an autonomous, DnaK-independent fashion. Unfolded proteins bind initially to DnaJ; upon interaction with the DnaJ-bound protein, DnaK hydrolyzes its bound ATP, resulting in the formation of a stable complex. GrpE releases ADP from DnaK; ATP binding to DnaK triggers the release of the substrate protein, thus completing the reaction cycle. Several rounds of ATP-dependent interactions between DnaJ, DnaK and GrpE are required for fully efficient folding. Also involved, together with DnaK and GrpE, in the DNA replication of plasmids through activation of initiation proteins. This Idiomarina loihiensis (strain ATCC BAA-735 / DSM 15497 / L2-TR) protein is Chaperone protein DnaJ.